The chain runs to 128 residues: Putative esterase aq_1494 (128 aa).

The active site involves Asp-15.

It belongs to the 4-hydroxybenzoyl-CoA thioesterase family.

The polypeptide is Putative esterase aq_1494 (Aquifex aeolicus (strain VF5)).